Consider the following 202-residue polypeptide: Inner membrane-spanning protein YciB (202 aa).

Helical transmembrane passes span 47 to 67, 75 to 95, 101 to 121, 146 to 166, and 174 to 194; these read ILLA…WVHF, MLWV…AFQN, WKPT…AFIL, LSWI…AFNF, and FKLF…GMLL.

It belongs to the YciB family.

The protein localises to the cell inner membrane. Its function is as follows. Plays a role in cell envelope biogenesis, maintenance of cell envelope integrity and membrane homeostasis. This Dechloromonas aromatica (strain RCB) protein is Inner membrane-spanning protein YciB.